The sequence spans 128 residues: Large ribosomal subunit protein uL22 (128 aa).

Belongs to the universal ribosomal protein uL22 family. As to quaternary structure, part of the 50S ribosomal subunit.

In terms of biological role, this protein binds specifically to 23S rRNA; its binding is stimulated by other ribosomal proteins, e.g. L4, L17, and L20. It is important during the early stages of 50S assembly. It makes multiple contacts with different domains of the 23S rRNA in the assembled 50S subunit and ribosome. The globular domain of the protein is located near the polypeptide exit tunnel on the outside of the subunit, while an extended beta-hairpin is found that lines the wall of the exit tunnel in the center of the 70S ribosome. This is Large ribosomal subunit protein uL22 from Rhodopseudomonas palustris (strain BisA53).